Here is a 161-residue protein sequence, read N- to C-terminus: C-type lectin lectoxin-Lio3 (161 aa).

An N-terminal signal peptide occupies residues 1–23 (MRRFIFMSLGLLVLAFSLSGIGA). Cystine bridges form between Cys27–Cys38, Cys55–Cys154, and Cys129–Cys146. In terms of domain architecture, C-type lectin spans 34 to 155 (HNISCYKLFT…CGLLHYFICQ (122 aa)). N-linked (GlcNAc...) asparagine glycosylation occurs at Asn35. A Mannose-binding motif is present at residues 117–119 (KGE). Ca(2+)-binding residues include Glu127, Asn142, and Asp143.

Belongs to the true venom lectin family. As to expression, expressed by the venom gland.

The protein localises to the secreted. Its function is as follows. Mannose-binding lectin which recognizes specific carbohydrate structures and agglutinates a variety of animal cells by binding to cell-surface glycoproteins and glycolipids. May be a calcium-dependent lectin. This Erythrolamprus poecilogyrus (Water snake) protein is C-type lectin lectoxin-Lio3.